The following is a 490-amino-acid chain: UDP-N-acetylmuramoyl-L-alanyl-D-glutamate--2,6-diaminopimelate ligase (490 aa).

UDP-N-acetyl-alpha-D-muramoyl-L-alanyl-D-glutamate contacts are provided by residues leucine 22, serine 24, and 39-41 (HQT). Residue 111–117 (GTNGKTT) coordinates ATP. Residues asparagine 152, 153-154 (TT), serine 180, glutamine 186, and arginine 188 each bind UDP-N-acetyl-alpha-D-muramoyl-L-alanyl-D-glutamate. N6-carboxylysine is present on lysine 220. Meso-2,6-diaminopimelate is bound by residues arginine 385, 409–412 (DNPR), glycine 460, and glutamate 464. The Meso-diaminopimelate recognition motif signature appears at 409–412 (DNPR).

Belongs to the MurCDEF family. MurE subfamily. It depends on Mg(2+) as a cofactor. Carboxylation is probably crucial for Mg(2+) binding and, consequently, for the gamma-phosphate positioning of ATP.

It is found in the cytoplasm. It catalyses the reaction UDP-N-acetyl-alpha-D-muramoyl-L-alanyl-D-glutamate + meso-2,6-diaminopimelate + ATP = UDP-N-acetyl-alpha-D-muramoyl-L-alanyl-gamma-D-glutamyl-meso-2,6-diaminopimelate + ADP + phosphate + H(+). It functions in the pathway cell wall biogenesis; peptidoglycan biosynthesis. In terms of biological role, catalyzes the addition of meso-diaminopimelic acid to the nucleotide precursor UDP-N-acetylmuramoyl-L-alanyl-D-glutamate (UMAG) in the biosynthesis of bacterial cell-wall peptidoglycan. This is UDP-N-acetylmuramoyl-L-alanyl-D-glutamate--2,6-diaminopimelate ligase from Yersinia pestis.